Reading from the N-terminus, the 227-residue chain is Small ribosomal subunit protein uS7 (227 aa).

Composition is skewed to acidic residues over residues 1-12 (MSESDTDPDIDD) and 20-31 (NDVDVAVDESES). Residues 1–43 (MSESDTDPDIDDDAHNNGDNDVDVAVDESESAETTTDTDTASA) are disordered. A compositionally biased stretch (low complexity) spans 32–43 (AETTTDTDTASA).

It belongs to the universal ribosomal protein uS7 family. As to quaternary structure, part of the 30S ribosomal subunit.

Functionally, one of the primary rRNA binding proteins, it binds directly to 16S rRNA where it nucleates assembly of the head domain of the 30S subunit. Is located at the subunit interface close to the decoding center. This is Small ribosomal subunit protein uS7 from Haloquadratum walsbyi (strain DSM 16790 / HBSQ001).